A 284-amino-acid chain; its full sequence is NADH-cytochrome b5 reductase 1 (284 aa).

The chain crosses the membrane as a helical span at residues 7–27; sequence KLVVVIVIVVVPLLFKFIIGP. Positions 38-142 constitute an FAD-binding FR-type domain; the sequence is NDFQSFPLVE…KGPRGNYHYE (105 aa). 148–180 is an FAD binding site; the sequence is HLGMIAGGTGIAPMYQIMKAIAMDSHDTTKVSL.

This sequence belongs to the flavoprotein pyridine nucleotide cytochrome reductase family. In terms of assembly, monomer. Component of the 2-(3-amino-3-carboxypropyl)histidine synthase complex composed of DPH1, DPH2, KTI11/DPH3 and a NADH-dependent reductase, predominantly CBR1. Interacts with KTI11/DPH3. Interacts with STE20. FAD is required as a cofactor.

The protein localises to the mitochondrion outer membrane. It carries out the reaction 2 Fe(III)-[cytochrome b5] + NADH = 2 Fe(II)-[cytochrome b5] + NAD(+) + H(+). It catalyses the reaction 2 Fe(3+)-[Dph3] + NADH = 2 Fe(2+)-[Dph3] + NAD(+) + H(+). Its pathway is protein modification; peptidyl-diphthamide biosynthesis. Its activity is regulated as follows. Competitively inhibited by NAD(+). Inhibited by mercurials such as p-chloromercuribenzoate (PCMB) and HgCl(2). Enzymatic activity increases under anaerobic conditions. NADH-dependent reductase for KTI11/DPH3 and cytochrome b5. Required for the first step of diphthamide biosynthesis, a post-translational modification of histidine which occurs in elongation factor 2. DPH1 and DPH2 transfer a 3-amino-3-carboxypropyl (ACP) group from S-adenosyl-L-methionine (SAM) to a histidine residue, the reaction is assisted by a reduction system comprising KTI11/DPH3 and a NADH-dependent reductase, predominantly CBR1. By reducing KTI11/DPH3, also involved in the formation of the tRNA wobble base modification mcm5s 2U (5-methoxycarbonylmethyl-2-thiouridine), mediated by the elongator complex. The cytochrome b5/NADH cytochrome b5 reductase electron transfer system supports the catalytic activity of several sterol biosynthetic enzymes. Plays a role in bud morphology. The chain is NADH-cytochrome b5 reductase 1 (CBR1) from Saccharomyces cerevisiae (strain YJM789) (Baker's yeast).